Consider the following 607-residue polypeptide: Glutamine--fructose-6-phosphate aminotransferase [isomerizing] (607 aa).

The active-site Nucleophile; for GATase activity is the C2. Residues 2–217 (CGIIGILGKR…DGDWAVLTRE (216 aa)) enclose the Glutamine amidotransferase type-2 domain. 2 consecutive SIS domains span residues 277–422 (TVRS…QRGF) and 455–597 (ICRN…VDQP). K602 serves as the catalytic For Fru-6P isomerization activity.

Homodimer.

The protein localises to the cytoplasm. It carries out the reaction D-fructose 6-phosphate + L-glutamine = D-glucosamine 6-phosphate + L-glutamate. Functionally, catalyzes the first step in hexosamine metabolism, converting fructose-6P into glucosamine-6P using glutamine as a nitrogen source. The sequence is that of Glutamine--fructose-6-phosphate aminotransferase [isomerizing] from Bartonella henselae (strain ATCC 49882 / DSM 28221 / CCUG 30454 / Houston 1) (Rochalimaea henselae).